Here is a 122-residue protein sequence, read N- to C-terminus: Ribosome-binding factor A (122 aa).

It belongs to the RbfA family. Monomer. Binds 30S ribosomal subunits, but not 50S ribosomal subunits or 70S ribosomes.

It is found in the cytoplasm. Functionally, one of several proteins that assist in the late maturation steps of the functional core of the 30S ribosomal subunit. Associates with free 30S ribosomal subunits (but not with 30S subunits that are part of 70S ribosomes or polysomes). Required for efficient processing of 16S rRNA. May interact with the 5'-terminal helix region of 16S rRNA. The polypeptide is Ribosome-binding factor A (Burkholderia mallei (strain NCTC 10229)).